The following is a 322-amino-acid chain: Protein-methionine-sulfoxide reductase catalytic subunit MsrP (322 aa).

Positions 1-59 (MSFRDALNLPSSEITDESVYRDRRRLLQLLALTPALGVAGCAEADPPPPPKTVVTPAQA) form a signal peptide, tat-type signal. Mo-molybdopterin-binding positions include Asn-79, 82-83 (YE), Cys-137, Thr-172, Asn-220, Arg-225, and 236-238 (SIK).

This sequence belongs to the MsrP family. Heterodimer of a catalytic subunit (MsrP) and a heme-binding subunit (MsrQ). Mo-molybdopterin is required as a cofactor. Post-translationally, predicted to be exported by the Tat system. The position of the signal peptide cleavage has not been experimentally proven.

Its subcellular location is the periplasm. It catalyses the reaction L-methionyl-[protein] + a quinone + H2O = L-methionyl-(S)-S-oxide-[protein] + a quinol. The catalysed reaction is L-methionyl-[protein] + a quinone + H2O = L-methionyl-(R)-S-oxide-[protein] + a quinol. Functionally, part of the MsrPQ system that repairs oxidized periplasmic proteins containing methionine sulfoxide residues (Met-O), using respiratory chain electrons. Thus protects these proteins from oxidative-stress damage caused by reactive species of oxygen and chlorine generated by the host defense mechanisms. MsrPQ is essential for the maintenance of envelope integrity under bleach stress, rescuing a wide series of structurally unrelated periplasmic proteins from methionine oxidation. The catalytic subunit MsrP is non-stereospecific, being able to reduce both (R-) and (S-) diastereoisomers of methionine sulfoxide. In Xanthomonas axonopodis pv. citri (strain 306), this protein is Protein-methionine-sulfoxide reductase catalytic subunit MsrP.